The sequence spans 374 residues: DNA replication and repair protein RecF (374 aa).

34–41 (GNNGAGKT) contacts ATP.

Belongs to the RecF family.

The protein resides in the cytoplasm. The RecF protein is involved in DNA metabolism; it is required for DNA replication and normal SOS inducibility. RecF binds preferentially to single-stranded, linear DNA. It also seems to bind ATP. This Rhizobium etli (strain CIAT 652) protein is DNA replication and repair protein RecF.